Here is a 177-residue protein sequence, read N- to C-terminus: Protein ParB (177 aa).

An N-terminal signal peptide occupies residues 1-26 (MKRRSYAMLRAAAALAVLVVASPAWA). One can recognise a TNase-like domain in the interval 27 to 157 (ELRGEVVRII…RGKRVGLWSD (131 aa)). Active-site residues include R53, E61, and R95.

In terms of assembly, monomer. Requires Ca(2+) as cofactor. The N-terminus is blocked.

Its subcellular location is the secreted. Its activity is regulated as follows. Endonuclease activity is inhibited by EDTA. Its function is as follows. Involved in plasmid partition. An endonuclease that acts on supercoiled dsDNA, converting it first to open circular DNA and then linearizing it. Preferentially cleaves regions in dsDNA that are capable of forming ssDNA, such as AT-rich regions and sequences that can form cruciforms. Has poor endonucleolytic activity on linear DNA, has 5'-3' exonuclease activity on dsDNA cleaving generating 3'-phosphonucleotides. This chain is Protein ParB, found in Escherichia coli.